A 570-amino-acid polypeptide reads, in one-letter code: Hydroxylamine reductase (570 aa).

[4Fe-4S] cluster-binding residues include Cys5, Cys8, Cys17, and Cys23. His266, Glu290, Cys334, Cys425, Cys453, Cys478, Glu513, and Lys515 together coordinate hybrid [4Fe-2O-2S] cluster. At Cys425 the chain carries Cysteine persulfide.

It belongs to the HCP family. It depends on [4Fe-4S] cluster as a cofactor. Hybrid [4Fe-2O-2S] cluster serves as cofactor.

The protein localises to the cytoplasm. The enzyme catalyses A + NH4(+) + H2O = hydroxylamine + AH2 + H(+). Functionally, catalyzes the reduction of hydroxylamine to form NH(3) and H(2)O. The polypeptide is Hydroxylamine reductase (Clostridium botulinum (strain Loch Maree / Type A3)).